We begin with the raw amino-acid sequence, 481 residues long: Glutamate-1-semialdehyde 2,1-aminomutase, chloroplastic (481 aa).

A disordered region spans residues 18–40 (NQTPKWGFSPSHRRCNPSSSSSA). K321 carries the post-translational modification N6-(pyridoxal phosphate)lysine.

This sequence belongs to the class-III pyridoxal-phosphate-dependent aminotransferase family. HemL subfamily. As to quaternary structure, homodimer. Pyridoxal 5'-phosphate serves as cofactor.

The protein resides in the plastid. It localises to the chloroplast. It catalyses the reaction (S)-4-amino-5-oxopentanoate = 5-aminolevulinate. It participates in porphyrin-containing compound metabolism; protoporphyrin-IX biosynthesis; 5-aminolevulinate from L-glutamyl-tRNA(Glu): step 2/2. The protein operates within porphyrin-containing compound metabolism; chlorophyll biosynthesis. The polypeptide is Glutamate-1-semialdehyde 2,1-aminomutase, chloroplastic (Solanum lycopersicum (Tomato)).